The following is a 120-amino-acid chain: Large ribosomal subunit protein uL18 (120 aa).

It belongs to the universal ribosomal protein uL18 family. Part of the 50S ribosomal subunit; part of the 5S rRNA/L5/L18/L25 subcomplex. Contacts the 5S and 23S rRNAs.

Its function is as follows. This is one of the proteins that bind and probably mediate the attachment of the 5S RNA into the large ribosomal subunit, where it forms part of the central protuberance. In Bartonella quintana (strain Toulouse) (Rochalimaea quintana), this protein is Large ribosomal subunit protein uL18.